Reading from the N-terminus, the 476-residue chain is 1-aminocyclopropane-1-carboxylate synthase 4 (476 aa).

K282 bears the N6-(pyridoxal phosphate)lysine mark.

It belongs to the class-I pyridoxal-phosphate-dependent aminotransferase family. In terms of assembly, homodimer. The cofactor is pyridoxal 5'-phosphate.

It catalyses the reaction S-adenosyl-L-methionine = 1-aminocyclopropane-1-carboxylate + S-methyl-5'-thioadenosine + H(+). Its pathway is alkene biosynthesis; ethylene biosynthesis via S-adenosyl-L-methionine; ethylene from S-adenosyl-L-methionine: step 1/2. Catalyzes the formation of 1-aminocyclopropane-1-carboxylate, a direct precursor of ethylene in higher plants. This Solanum lycopersicum (Tomato) protein is 1-aminocyclopropane-1-carboxylate synthase 4 (ACS4).